Reading from the N-terminus, the 113-residue chain is Hydrogenase maturation factor HypA (113 aa).

His2 contacts Ni(2+). Zn(2+) is bound by residues Cys73, Cys76, Cys89, and Cys92.

This sequence belongs to the HypA/HybF family.

Involved in the maturation of [NiFe] hydrogenases. Required for nickel insertion into the metal center of the hydrogenase. The sequence is that of Hydrogenase maturation factor HypA from Acidithiobacillus ferrooxidans (strain ATCC 23270 / DSM 14882 / CIP 104768 / NCIMB 8455) (Ferrobacillus ferrooxidans (strain ATCC 23270)).